Reading from the N-terminus, the 195-residue chain is Meiotically up-regulated gene 84 protein (195 aa).

Residues 1–84 (MTLTHHSTFI…IMVKVPTYEY (84 aa)) are Cytoplasmic-facing. A helical membrane pass occupies residues 85 to 105 (YGFVMYLVSMLGFGVYIVWAL). At 106–122 (TPAPVLKFFEIHYYLSR) the chain is on the lumenal side. Residues 123–143 (WWALAIPTWLFVLVIYIHVVL) form a helical membrane-spanning segment. The Cytoplasmic portion of the chain corresponds to 144–195 (NAYNTEVLTKPFSSLECIVDQYALVGEEDGAAHGRVVDLRLCDVNKQQLEET).

It is found in the endoplasmic reticulum membrane. Functionally, has a role in meiosis. The polypeptide is Meiotically up-regulated gene 84 protein (mug84) (Schizosaccharomyces pombe (strain 972 / ATCC 24843) (Fission yeast)).